The sequence spans 396 residues: Argininosuccinate synthase (396 aa).

ATP is bound at residue 9–17 (AYSGGLDTS). Tyr-85 contributes to the L-citrulline binding site. Gly-115 is a binding site for ATP. Thr-117, Asn-121, and Asp-122 together coordinate L-aspartate. Asn-121 provides a ligand contact to L-citrulline. Residues Arg-125, Ser-173, Glu-258, and Tyr-270 each coordinate L-citrulline.

It belongs to the argininosuccinate synthase family. Type 1 subfamily. In terms of assembly, homotetramer.

It is found in the cytoplasm. It catalyses the reaction L-citrulline + L-aspartate + ATP = 2-(N(omega)-L-arginino)succinate + AMP + diphosphate + H(+). The protein operates within amino-acid biosynthesis; L-arginine biosynthesis; L-arginine from L-ornithine and carbamoyl phosphate: step 2/3. This chain is Argininosuccinate synthase, found in Streptococcus mutans serotype c (strain ATCC 700610 / UA159).